We begin with the raw amino-acid sequence, 509 residues long: ATP synthase subunit alpha (509 aa).

Position 169 to 176 (169 to 176 (GDRQTGKT)) interacts with ATP.

It belongs to the ATPase alpha/beta chains family. F-type ATPases have 2 components, CF(1) - the catalytic core - and CF(0) - the membrane proton channel. CF(1) has five subunits: alpha(3), beta(3), gamma(1), delta(1), epsilon(1). CF(0) has three main subunits: a(1), b(2) and c(9-12). The alpha and beta chains form an alternating ring which encloses part of the gamma chain. CF(1) is attached to CF(0) by a central stalk formed by the gamma and epsilon chains, while a peripheral stalk is formed by the delta and b chains.

Its subcellular location is the cell inner membrane. It catalyses the reaction ATP + H2O + 4 H(+)(in) = ADP + phosphate + 5 H(+)(out). Its function is as follows. Produces ATP from ADP in the presence of a proton gradient across the membrane. The alpha chain is a regulatory subunit. In Rhizobium leguminosarum bv. trifolii (strain WSM2304), this protein is ATP synthase subunit alpha.